Consider the following 191-residue polypeptide: GDP-mannose pyrophosphatase (191 aa).

Residues Y17, K38–E40, R67, and A85–L87 each bind GDP-alpha-D-mannose. Positions D43–L180 constitute a Nudix hydrolase domain. Residues A85, E100, and E104 each contribute to the Mg(2+) site. Positions G86–G106 match the Nudix box motif. GDP-alpha-D-mannose is bound by residues E104, E127, D150–E151, and K176. Residue E151 participates in Mg(2+) binding.

This sequence belongs to the Nudix hydrolase family. NudK subfamily. Homodimer. Mg(2+) serves as cofactor.

The catalysed reaction is GDP-alpha-D-mannose + H2O = alpha-D-mannose 1-phosphate + GMP + 2 H(+). Nucleoside diphosphate sugar hydrolase that hydrolyzes GDP-mannose as its preferred substrate, yielding GMP and mannose-1-phosphate. The chain is GDP-mannose pyrophosphatase (nudK) from Cronobacter sakazakii (strain ATCC BAA-894) (Enterobacter sakazakii).